The sequence spans 66 residues: Large ribosomal subunit protein bL35 (66 aa).

This sequence belongs to the bacterial ribosomal protein bL35 family.

In Brucella anthropi (strain ATCC 49188 / DSM 6882 / CCUG 24695 / JCM 21032 / LMG 3331 / NBRC 15819 / NCTC 12168 / Alc 37) (Ochrobactrum anthropi), this protein is Large ribosomal subunit protein bL35.